Reading from the N-terminus, the 360-residue chain is Phospho-N-acetylmuramoyl-pentapeptide-transferase (360 aa).

A run of 10 helical transmembrane segments spans residues 26–46, 74–94, 97–117, 134–154, 168–188, 199–219, 236–256, 263–283, 288–308, and 338–358; these read AILG…KLIE, MGGL…GDLG, YVWV…IDDY, YILQ…TAAN, VMPQ…VGSS, GLAI…AYLS, SGEL…FLWF, VFMG…IAVL, ILLV…ILQV, and VIVR…ATLK.

Belongs to the glycosyltransferase 4 family. MraY subfamily. It depends on Mg(2+) as a cofactor.

It localises to the cell inner membrane. It catalyses the reaction UDP-N-acetyl-alpha-D-muramoyl-L-alanyl-gamma-D-glutamyl-meso-2,6-diaminopimeloyl-D-alanyl-D-alanine + di-trans,octa-cis-undecaprenyl phosphate = di-trans,octa-cis-undecaprenyl diphospho-N-acetyl-alpha-D-muramoyl-L-alanyl-D-glutamyl-meso-2,6-diaminopimeloyl-D-alanyl-D-alanine + UMP. It functions in the pathway cell wall biogenesis; peptidoglycan biosynthesis. Catalyzes the initial step of the lipid cycle reactions in the biosynthesis of the cell wall peptidoglycan: transfers peptidoglycan precursor phospho-MurNAc-pentapeptide from UDP-MurNAc-pentapeptide onto the lipid carrier undecaprenyl phosphate, yielding undecaprenyl-pyrophosphoryl-MurNAc-pentapeptide, known as lipid I. The sequence is that of Phospho-N-acetylmuramoyl-pentapeptide-transferase from Shewanella baltica (strain OS195).